The chain runs to 771 residues: Tetratricopeptide repeat-containing protein trd-1 (771 aa).

6 TPR repeats span residues leucine 389–leucine 415, isoleucine 416–arginine 449, alanine 451–glutamine 484, leucine 485–histidine 518, glutamate 520–histidine 552, and proline 553–glycine 586.

It belongs to the TTC27 family. As to expression, expressed in the spermatheca.

It localises to the cytoplasm. In terms of biological role, developmental protein required for cell fate determination in both the germline and seam cells of the developing epidermis. Specifically, involved in sex determination and may function in parallel or downstream of other sex determination factors, including tra-2 and fem-3, to promote oogenesis in its role in the regulation of the switch from spermatogenesis to oogenesis in the gonads. Also implicated in the mitosis to meiosis switch in distal tip cells. The polypeptide is Tetratricopeptide repeat-containing protein trd-1 (Caenorhabditis elegans).